A 407-amino-acid chain; its full sequence is uncharacterized protein (407 aa).

Residues 1–290 lie on the Lumenal side of the membrane; the sequence is MPLNIIGTAL…SNSLRRVISN (290 aa). NADP(+)-binding residues include D114, K236, and S281. Residue K236 is the Lowers pKa of active site Tyr of the active site. Residues 291-311 form a helical membrane-spanning segment; it reads GSVVLLIILYCILLYPILWLF. Residues 312–407 lie on the Cytoplasmic side of the membrane; it reads TKSGRRGDQS…KSQNKSRKDD (96 aa). Positions 361-390 form a coiled coil; that stretch reads ELQKKLFDNTERDILQLEKKVAAKRNANKT. The interval 383–407 is disordered; sequence AKRNANKTGNQNSKKKSQNKSRKDD. A compositionally biased stretch (basic residues) spans 395-407; it reads SKKKSQNKSRKDD.

It belongs to the short-chain dehydrogenases/reductases (SDR) family.

It is found in the endoplasmic reticulum membrane. In terms of biological role, may be involved in lipid metabolism. This is an uncharacterized protein from Saccharomyces cerevisiae (strain ATCC 204508 / S288c) (Baker's yeast).